Reading from the N-terminus, the 454-residue chain is Trichosetin biosynthesis cluster transcription factor TF22 (454 aa).

Positions 13 to 47 (CDRCRSHKLKCTVSPEDSRSGPHKCTRCIRAQVTC) form a DNA-binding region, zn(2)-C6 fungal-type. Positions 51–89 (PRSQSKRTPNGKNKPEKPKPELEPPQKTSPPVCSSSLAG) are disordered. The span at 52–61 (RSQSKRTPNG) shows a compositional bias: polar residues. Basic and acidic residues predominate over residues 63-74 (NKPEKPKPELEP).

It is found in the nucleus. In terms of biological role, transcription factor that regulates the expression of the gene cluster that mediates the biosynthesis of trichosetin, a trans-fused decalin-containing tetramic acid with antimicrobial activity. Directly activates expression of only the three biosynthetic genes PKS-NRPS1, DA and ER, while TF23 and MFS-T are induced by the final product trichosetin and not by TF22. The protein is Trichosetin biosynthesis cluster transcription factor TF22 of Gibberella fujikuroi (strain CBS 195.34 / IMI 58289 / NRRL A-6831) (Bakanae and foot rot disease fungus).